We begin with the raw amino-acid sequence, 56 residues long: Alpha-pompilidotoxin (56 aa).

An N-terminal signal peptide occupies residues 1–22 (MFKQLILLALAAVFLLINISSA). A propeptide spanning residues 23-42 (EPAAEPNANAEPLAEASAEP) is cleaved from the precursor. Leu-55 carries the post-translational modification Leucine amide.

As to expression, expressed by the venom gland.

The protein localises to the secreted. Functionally, inhibits sodium channels (Nav) inactivation. Shows two types of inhibitory activities on channels. Inhibition of hNav1.6/SCN8A shows a large increase in the steady-state current component without any increase in the slow component, whereas inhibition of hNav1.1/SCN1A, hNav1.2/SCN2A, hNav1.3/SCN3A and hNav1.7/SCN9A shows a large increase in the slow component with only a small steady-state component. Is 5-fold less potent than beta-PMTX for inducing repetitive action potentials in lobster neuromuscular junctions. In Anoplius samariensis (Solitary wasp), this protein is Alpha-pompilidotoxin.